Consider the following 87-residue polypeptide: Sec-independent protein translocase protein TatA (87 aa).

A helical transmembrane segment spans residues 1–21; the sequence is MGGMSITHWIVVAVVVMIFFG. The segment at 40-87 is disordered; sequence KKGMSEDDTTPPAAPPAPAPRLENQPLPPENTTQNVAQNVPNDIKNNQ. The segment covering 69–87 has biased composition (polar residues); it reads ENTTQNVAQNVPNDIKNNQ.

This sequence belongs to the TatA/E family. In terms of assembly, the Tat system comprises two distinct complexes: a TatABC complex, containing multiple copies of TatA, TatB and TatC subunits, and a separate TatA complex, containing only TatA subunits. Substrates initially bind to the TatABC complex, which probably triggers association of the separate TatA complex to form the active translocon.

It is found in the cell inner membrane. Part of the twin-arginine translocation (Tat) system that transports large folded proteins containing a characteristic twin-arginine motif in their signal peptide across membranes. TatA could form the protein-conducting channel of the Tat system. This is Sec-independent protein translocase protein TatA from Zymomonas mobilis subsp. mobilis (strain ATCC 31821 / ZM4 / CP4).